The primary structure comprises 79 residues: Large ribosomal subunit protein uL24 (79 aa).

Belongs to the universal ribosomal protein uL24 family. As to quaternary structure, part of the 50S ribosomal subunit.

In terms of biological role, one of two assembly initiator proteins, it binds directly to the 5'-end of the 23S rRNA, where it nucleates assembly of the 50S subunit. Functionally, one of the proteins that surrounds the polypeptide exit tunnel on the outside of the subunit. This Lactobacillus gasseri (strain ATCC 33323 / DSM 20243 / BCRC 14619 / CIP 102991 / JCM 1131 / KCTC 3163 / NCIMB 11718 / NCTC 13722 / AM63) protein is Large ribosomal subunit protein uL24.